We begin with the raw amino-acid sequence, 475 residues long: Bifunctional protein HldE (475 aa).

A ribokinase region spans residues 1 to 321 (MADKIDISLY…RALHQITASH (321 aa)). 197 to 200 (NLKE) is an ATP binding site. Residue D266 is part of the active site. The interval 346–475 (MTNGCFDILH…TSRLVEKMLN (130 aa)) is cytidylyltransferase.

The protein in the N-terminal section; belongs to the carbohydrate kinase PfkB family. This sequence in the C-terminal section; belongs to the cytidylyltransferase family. In terms of assembly, homodimer.

The catalysed reaction is D-glycero-beta-D-manno-heptose 7-phosphate + ATP = D-glycero-beta-D-manno-heptose 1,7-bisphosphate + ADP + H(+). The enzyme catalyses D-glycero-beta-D-manno-heptose 1-phosphate + ATP + H(+) = ADP-D-glycero-beta-D-manno-heptose + diphosphate. It functions in the pathway nucleotide-sugar biosynthesis; ADP-L-glycero-beta-D-manno-heptose biosynthesis; ADP-L-glycero-beta-D-manno-heptose from D-glycero-beta-D-manno-heptose 7-phosphate: step 1/4. The protein operates within nucleotide-sugar biosynthesis; ADP-L-glycero-beta-D-manno-heptose biosynthesis; ADP-L-glycero-beta-D-manno-heptose from D-glycero-beta-D-manno-heptose 7-phosphate: step 3/4. Its function is as follows. Catalyzes the phosphorylation of D-glycero-D-manno-heptose 7-phosphate at the C-1 position to selectively form D-glycero-beta-D-manno-heptose-1,7-bisphosphate. Functionally, catalyzes the ADP transfer from ATP to D-glycero-beta-D-manno-heptose 1-phosphate, yielding ADP-D-glycero-beta-D-manno-heptose. The chain is Bifunctional protein HldE from Coxiella burnetii (strain RSA 331 / Henzerling II).